We begin with the raw amino-acid sequence, 404 residues long: Iron-sulfur assembly protein IscA2 (404 aa).

Residues 244 to 289 (KEEDEKKLDKLLKKRNIKKRDIVTITEEAKEELKKIISINKKENNN) are a coiled coil.

Belongs to the HesB/IscA family. In terms of assembly, dimer. Homotetramer. Interacts with ABCB6.

The protein resides in the mitochondrion. Its pathway is cofactor biosynthesis; iron-sulfur cluster biosynthesis. Participates in iron-sulfur cluster formation (ISC) pathway for iron-sulfur (Fe-S) cluster biogenesis. Can bind and transfer [4Fe-4S] clusters to target apo-proteins. This is Iron-sulfur assembly protein IscA2 from Plasmodium falciparum (isolate 3D7).